The primary structure comprises 193 residues: Protein THEM6 (193 aa).

Residues 1 to 18 (MSWLVVLLILYVIWDVNY) form the signal peptide. The N-linked (GlcNAc...) asparagine glycan is linked to Asn-149.

This sequence belongs to the THEM6 family.

The protein resides in the secreted. The polypeptide is Protein THEM6 (Drosophila melanogaster (Fruit fly)).